Reading from the N-terminus, the 145-residue chain is Bacilliredoxin ABC2045 (145 aa).

The protein belongs to the bacilliredoxin family.

The polypeptide is Bacilliredoxin ABC2045 (Shouchella clausii (strain KSM-K16) (Alkalihalobacillus clausii)).